The following is a 148-amino-acid chain: Single-stranded DNA-binding protein 2 (148 aa).

One can recognise an SSB domain in the interval 6-108 (MNHITVSGLV…IEAESFGHDL (103 aa)).

In terms of assembly, homotetramer.

The chain is Single-stranded DNA-binding protein 2 (ssb2) from Tropheryma whipplei (strain TW08/27) (Whipple's bacillus).